The chain runs to 1009 residues: Helicase-like transcription factor (1009 aa).

Arg-27 is subject to Omega-N-methylarginine. The DNA-binding element occupies 38–287 (EFQDVIPPDD…FSEKDRPENV (250 aa)). A Glycyl lysine isopeptide (Lys-Gly) (interchain with G-Cter in SUMO2) cross-link involves residue Lys-112. At Tyr-195 the chain carries Phosphotyrosine; by JAK2. A Glycyl lysine isopeptide (Lys-Gly) (interchain with G-Cter in SUMO2) cross-link involves residue Lys-211. ATP is bound at residue 294–301 (DDMGLGKT). The disordered stretch occupies residues 336–365 (DDSMKLGGNNTSEKADGLSKDASRCSEQPS). Positions 348 to 359 (EKADGLSKDASR) are enriched in basic and acidic residues. Ser-397, Ser-398, and Ser-400 each carry phosphoserine. One can recognise a Helicase ATP-binding domain in the interval 435 to 606 (IEDVAFACAL…WSLLSFLKLK (172 aa)). Positions 557–560 (DEGH) match the DEGH box motif. Thr-736 bears the Phosphothreonine mark. The RING-type zinc finger occupies 760–801 (CAICLDSLTVPVITHCAHVFCKPCICQVIQNEQPHAKCPLCR). The Helicase C-terminal domain maps to 837 to 996 (ALMHALTDLR…TKKPNADEMK (160 aa)). Residues 925 to 1009 (SRVFLMDPAW…INEIRTLIDL (85 aa)) form an interaction with SP1 and SP3 region.

The protein belongs to the SNF2/RAD54 helicase family. RAD16 subfamily. Interacts with SP1 and SP3 independently of DNA; the interaction with these transcriptional factors may be required for basal transcription of target genes. Interacts with EGR1; the interaction requires prior binding to DNA and represses c-Rel via a DNA looping mechanism. Interacts with GATA4. Interacts with PCNA; the interaction promotes polyubiquitination of PCNA through association with the UBE2B-RAD18 and UBE2V2-UBE2N ubiquitin ligase complexes. Interacts with RAD18, SHPRH, UBE2V2 and UBE2N. In terms of tissue distribution, expressed in brain, heart, kidney, liver, lung, pancreas, placenta and skeletal muscle.

It localises to the cytoplasm. The protein resides in the nucleus. The protein localises to the nucleolus. It is found in the nucleoplasm. It catalyses the reaction S-ubiquitinyl-[E2 ubiquitin-conjugating enzyme]-L-cysteine + [acceptor protein]-L-lysine = [E2 ubiquitin-conjugating enzyme]-L-cysteine + N(6)-ubiquitinyl-[acceptor protein]-L-lysine.. Its pathway is protein modification; protein ubiquitination. In terms of biological role, has both helicase and E3 ubiquitin ligase activities. Possesses intrinsic ATP-dependent nucleosome-remodeling activity; This activity may be required for transcriptional activation or repression of specific target promoters. These may include the SERPINE1 and HIV-1 promoters and the SV40 enhancer, to which this protein can bind directly. Plays a role in error-free postreplication repair (PRR) of damaged DNA and maintains genomic stability through acting as a ubiquitin ligase for 'Lys-63'-linked polyubiquitination of chromatin-bound PCNA. This is Helicase-like transcription factor (HLTF) from Homo sapiens (Human).